The sequence spans 189 residues: Chitin synthase 1 (189 aa).

It belongs to the chitin synthase family. Class I subfamily.

It is found in the cell membrane. The catalysed reaction is [(1-&gt;4)-N-acetyl-beta-D-glucosaminyl](n) + UDP-N-acetyl-alpha-D-glucosamine = [(1-&gt;4)-N-acetyl-beta-D-glucosaminyl](n+1) + UDP + H(+). Its function is as follows. Polymerizes chitin, a structural polymer of the cell wall and septum, by transferring the sugar moiety of UDP-GlcNAc to the non-reducing end of the growing chitin polymer. In Rhinocladiella atrovirens, this protein is Chitin synthase 1 (CHS1).